A 794-amino-acid chain; its full sequence is cAMP and cAMP-inhibited cGMP 3',5'-cyclic phosphodiesterase 10A (794 aa).

3',5'-cyclic AMP contacts are provided by residues 296–297, 340–341, Thr-374, Gln-393, and His-525; these read RC and IA. The region spanning 452 to 769 is the PDEase domain; that stretch reads TSEEWQGLMH…NQWEKVIRGE (318 aa). His-525 functions as the Proton donor in the catalytic mechanism. His-525 provides a ligand contact to 3',5'-cyclic GMP. Residues His-529, His-563, Asp-564, and Asp-674 each coordinate a divalent metal cation. Position 726 (Gln-726) interacts with 3',5'-cyclic AMP. Gln-726 is a 3',5'-cyclic GMP binding site.

The protein belongs to the cyclic nucleotide phosphodiesterase family. In terms of assembly, homodimer. A divalent metal cation is required as a cofactor. Detected in striatum and testis (at protein level). Detected in whole brain, hippocampus, olfactory bulb, striatum neurons and testis.

The protein localises to the cytoplasm. Its subcellular location is the cytosol. It catalyses the reaction a nucleoside 3',5'-cyclic phosphate + H2O = a nucleoside 5'-phosphate + H(+). It carries out the reaction 3',5'-cyclic AMP + H2O = AMP + H(+). The enzyme catalyses 3',5'-cyclic GMP + H2O = GMP + H(+). Its pathway is purine metabolism; 3',5'-cyclic AMP degradation; AMP from 3',5'-cyclic AMP: step 1/1. The protein operates within purine metabolism; 3',5'-cyclic GMP degradation; GMP from 3',5'-cyclic GMP: step 1/1. Inhibited by dipyridamole and moderately by IBMX, zaprinast and rolipram. Functionally, plays a role in signal transduction by regulating the intracellular concentration of cyclic nucleotides. Can hydrolyze both cAMP and cGMP, but has higher affinity for cAMP and is more efficient with cAMP as substrate. This chain is cAMP and cAMP-inhibited cGMP 3',5'-cyclic phosphodiesterase 10A (Pde10a), found in Rattus norvegicus (Rat).